A 216-amino-acid chain; its full sequence is UPF0323 lipoprotein HPG27_212 (216 aa).

The first 27 residues, 1 to 27, serve as a signal peptide directing secretion; the sequence is MKKPYRKISDYAIVGGLSALVMVSIVG. Residue C28 is the site of N-palmitoyl cysteine attachment. A lipid anchor (S-diacylglycerol cysteine) is attached at C28. The segment covering 159–170 has biased composition (polar residues); it reads QRTYKSPQAYQR. A disordered region spans residues 159-216; that stretch reads QRTYKSPQAYQRSQNSFSKSAPSASSMGGASKGQSGFFGSSRPTSSPAVSSGTRGFNS. Residues 171-209 are compositionally biased toward low complexity; it reads SQNSFSKSAPSASSMGGASKGQSGFFGSSRPTSSPAVSS.

This sequence belongs to the UPF0323 family.

Its subcellular location is the cell membrane. The polypeptide is UPF0323 lipoprotein HPG27_212 (Helicobacter pylori (strain G27)).